Here is a 393-residue protein sequence, read N- to C-terminus: uncharacterized protein (393 aa).

Disordered regions lie at residues 77-118 and 259-296; these read DSNN…SIRP and INNN…DESN. Positions 79 to 92 are enriched in low complexity; the sequence is NNNNNNNNNNNNNN. Residues 103 to 114 show a composition bias toward polar residues; the sequence is IRQSLSSPQQLV. Positions 259-289 are enriched in low complexity; that stretch reads INNNNNNNNNNSNNNNNNNNSNNNDNNNNIN.

This is an uncharacterized protein from Dictyostelium discoideum (Social amoeba).